A 216-amino-acid polypeptide reads, in one-letter code: GTP-binding nuclear protein Ran, testis-specific isoform (216 aa).

A2 bears the N-acetylalanine mark. The Small GTPase Ran-type domain occupies 7–171 (PQVQFKVVLV…FWLARKLIGD (165 aa)). 17-24 (GDGGTGKT) is a GTP binding site. T24 is subject to Phosphothreonine. A switch-I region spans residues 37 to 45 (KEYVATLGV). K60 carries the N6-acetyllysine modification. 65 to 69 (DTAGQ) contacts GTP. A switch-II region spans residues 68-84 (GQEKFGGLRDGYYIQAQ). N6-acetyllysine; alternate is present on K71. K71 participates in a covalent cross-link: Glycyl lysine isopeptide (Lys-Gly) (interchain with G-Cter in SUMO2); alternate. K71 participates in a covalent cross-link: Glycyl lysine isopeptide (Lys-Gly) (interchain with G-Cter in ubiquitin); alternate. K99 bears the N6-acetyllysine mark. Residue 122-125 (NKVD) coordinates GTP. K134 carries the post-translational modification N6-acetyllysine. K159 is subject to N6-acetyllysine; alternate. Residue K159 is modified to N6-succinyllysine; alternate.

It belongs to the small GTPase superfamily. Ran family. In terms of tissue distribution, testis specific.

The protein localises to the nucleus. It carries out the reaction GTP + H2O = GDP + phosphate + H(+). GTP-binding protein involved in nucleocytoplasmic transport. Required for the import of protein into the nucleus and also for RNA export. Involved in chromatin condensation and control of cell cycle. In Mus musculus (Mouse), this protein is GTP-binding nuclear protein Ran, testis-specific isoform (Rasl2-9).